The following is a 65-amino-acid chain: Hirudin-2' (65 aa).

Positions 1–3 are interaction with thrombin active site; that stretch reads ITY. Cystine bridges form between Cys-6/Cys-14, Cys-16/Cys-28, and Cys-22/Cys-39. The segment at 39 to 65 is disordered; it reads CVTGEGTPKPQSHNDGDFEEIPEEYLQ. Residue Thr-45 is glycosylated (O-linked (GalNAc...) threonine). The interaction with fibrinogen-binding exosite of thrombin stretch occupies residues 55–65; the sequence is DFEEIPEEYLQ. The segment covering 55–65 has biased composition (acidic residues); it reads DFEEIPEEYLQ. At Tyr-63 the chain carries Sulfotyrosine.

Belongs to the protease inhibitor I14 (hirudin) family.

The protein resides in the secreted. In terms of biological role, hirudin is a potent thrombin-specific protease inhibitor. It forms a stable non-covalent complex with alpha-thrombin, thereby abolishing its ability to cleave fibrinogen. The polypeptide is Hirudin-2' (Hirudo medicinalis (Medicinal leech)).